The chain runs to 332 residues: Phosphate acyltransferase (332 aa).

It belongs to the PlsX family. As to quaternary structure, homodimer. Probably interacts with PlsY.

It is found in the cytoplasm. The catalysed reaction is a fatty acyl-[ACP] + phosphate = an acyl phosphate + holo-[ACP]. Its pathway is lipid metabolism; phospholipid metabolism. In terms of biological role, catalyzes the reversible formation of acyl-phosphate (acyl-PO(4)) from acyl-[acyl-carrier-protein] (acyl-ACP). This enzyme utilizes acyl-ACP as fatty acyl donor, but not acyl-CoA. This Sulfurimonas denitrificans (strain ATCC 33889 / DSM 1251) (Thiomicrospira denitrificans (strain ATCC 33889 / DSM 1251)) protein is Phosphate acyltransferase.